Reading from the N-terminus, the 384-residue chain is MRIIKCLDQIFRPVLPNVNINNIQKNKKINILYFIDVSKFHVFEQLLLEESLFRISNNTTEGLNNIGFVIVNNTCEEMNESKGNECIFNNKKCVILGISNKIKDHIKDTNYIKENKISLIKRFTGGGTIYINKNSLLVSLILPHKFEKNKKIYPSNITEWSYNYFYNTSKQIYDKTQINNEKNSLNKNHILFNQYFNYYENDYVYKDYDEHNKNIILKKVGGNAQSFARNYFVHHTSYIWTCDYKEMNNILLNPSKQPIYRNKRKHQHFLQSIKLCLHDDIHTPNIFIEKLIKHIKHIINYKNITDQHDYWFFNKINLKNINDHILRNSEHFDDIYVADMNLLQCIFNYYNNSSLFNNMRSTYFLDLEGKKVSDRYYDIPTYFL.

Residues 79 to 303 (NESKGNECIF…HIKHIINYKN (225 aa)) enclose the BPL/LPL catalytic domain.

Its subcellular location is the mitochondrion. The protein localises to the plastid. The protein resides in the apicoplast. In terms of biological role, in the mitochondrion and together with LipL1, involved in the lipoylation of the E2 component of the branched chain alpha-ketoacid dehydrogenase complex BCKDH-E2/BCDH and the E2 component of the alpha -ketoglutarate dehydrogenase complex KDH. LipL1 is responsible for catalysing the activation of lipoate, forming lipoyl-AMP while LipL2 is required but is not capable of catalyzing this reaction. Although its role is unclear, it may catalyze the transfer of lipoyl groups from lipoyl-AMP to BCDH and KDH or act as an effector protein. In Plasmodium falciparum (isolate 3D7), this protein is Inactive lipoate--protein ligase 2.